A 98-amino-acid polypeptide reads, in one-letter code: NADH-ubiquinone oxidoreductase chain 4L (98 aa).

The next 3 membrane-spanning stretches (helical) occupy residues 1 to 21, 29 to 49, and 61 to 81; these read MSLINMNLMLAFTMSLTGLLM, ALLCLEGMMLSLFTLTTLTIL, and IILLVFAACEAAIGLALLVMI.

It belongs to the complex I subunit 4L family. In terms of assembly, core subunit of respiratory chain NADH dehydrogenase (Complex I) which is composed of 45 different subunits.

The protein localises to the mitochondrion inner membrane. The catalysed reaction is a ubiquinone + NADH + 5 H(+)(in) = a ubiquinol + NAD(+) + 4 H(+)(out). Functionally, core subunit of the mitochondrial membrane respiratory chain NADH dehydrogenase (Complex I) which catalyzes electron transfer from NADH through the respiratory chain, using ubiquinone as an electron acceptor. Part of the enzyme membrane arm which is embedded in the lipid bilayer and involved in proton translocation. This Platanista minor (Indus river dolphin) protein is NADH-ubiquinone oxidoreductase chain 4L (MT-ND4L).